The sequence spans 74 residues: uncharacterized protein (74 aa).

This is an uncharacterized protein from Invertebrate iridescent virus 6 (IIV-6).